Consider the following 210-residue polypeptide: Protein GrpE (210 aa).

2 disordered regions span residues 1–40 (MTDD…PDPI) and 191–210 (KGGP…EKDA). Residues 11-23 (DATAADAAADATA) show a composition bias toward low complexity.

This sequence belongs to the GrpE family. In terms of assembly, homodimer.

It localises to the cytoplasm. In terms of biological role, participates actively in the response to hyperosmotic and heat shock by preventing the aggregation of stress-denatured proteins, in association with DnaK and GrpE. It is the nucleotide exchange factor for DnaK and may function as a thermosensor. Unfolded proteins bind initially to DnaJ; upon interaction with the DnaJ-bound protein, DnaK hydrolyzes its bound ATP, resulting in the formation of a stable complex. GrpE releases ADP from DnaK; ATP binding to DnaK triggers the release of the substrate protein, thus completing the reaction cycle. Several rounds of ATP-dependent interactions between DnaJ, DnaK and GrpE are required for fully efficient folding. This Rhizobium johnstonii (strain DSM 114642 / LMG 32736 / 3841) (Rhizobium leguminosarum bv. viciae) protein is Protein GrpE.